The following is a 1697-amino-acid chain: SAC3 family protein B (1697 aa).

Disordered regions lie at residues 54–134 (PPAS…QPGG), 167–280 (QRPN…SRSN), 306–413 (EATR…EQAR), and 491–512 (ESER…VDGD). Over residues 120–134 (QNPSPSSGQPYQPGG) the composition is skewed to low complexity. Residues 178–192 (DGSRNFLKDHGEHSR) show a composition bias toward basic and acidic residues. Residues 193-202 (ATSPPATSHI) show a composition bias toward polar residues. Residues 215 to 227 (RSQDSKRKSRSDI) are compositionally biased toward basic and acidic residues. Polar residues-rich tracts occupy residues 233-243 (MGFSRRNQSPV), 257-280 (PLSS…SRSN), and 335-380 (RFST…SPAT). In terms of domain architecture, PCI spans 625–813 (NIEQMNKTSV…KCSKLVHMKK (189 aa)).

It belongs to the SAC3 family. Interacts with SAC3A, EER5 and CML19. Interacts with UCH1 and UCH2.

It is found in the nucleus. Its function is as follows. Component of the TREX-2 complex (transcription and export complex 2), a muliprotein complex that functions in docking export-competent ribonucleoprotein particles (mRNPs) to the nuclear entrance of the nuclear pore complex (nuclear basket). TREX-2 participates in mRNA export and accurate chromatin positioning in the nucleus by tethering genes to the nuclear periphery. The protein is SAC3 family protein B of Arabidopsis thaliana (Mouse-ear cress).